We begin with the raw amino-acid sequence, 709 residues long: Elongation factor G (709 aa).

A tr-type G domain is found at Ala8–Leu297. Residues Ala17–Thr24, Asp81–His85, and Asn135–Asp138 each bind GTP.

It belongs to the TRAFAC class translation factor GTPase superfamily. Classic translation factor GTPase family. EF-G/EF-2 subfamily.

It is found in the cytoplasm. Catalyzes the GTP-dependent ribosomal translocation step during translation elongation. During this step, the ribosome changes from the pre-translocational (PRE) to the post-translocational (POST) state as the newly formed A-site-bound peptidyl-tRNA and P-site-bound deacylated tRNA move to the P and E sites, respectively. Catalyzes the coordinated movement of the two tRNA molecules, the mRNA and conformational changes in the ribosome. This chain is Elongation factor G, found in Lactococcus lactis subsp. lactis (strain IL1403) (Streptococcus lactis).